The following is a 439-amino-acid chain: MSGGVIVVGAGLAGAEASWQLVRRGVPVVLYEMRPRKCTPAHKTGDFAELVCSNSLRAEALTNAVGLLKEEMRRLGSLIMACADAHRVPAGGALAVDRQLFAAAVTERLTSHRLVTVCREEITTIPTAELVILATGPLTSDALADELRRLTGQEHLYFFDAVAPIVTLESIDQDRVFRSSRYGRGDPAYLNCPMSREEYERFWEALVAAERATRHTFERETHFEGCLPVEVIAARGRETLLYGPLKPVGLVDPRTGERPYAVVQLRQDNRAGTLYNLVGFQTNLKWGEQRRVFSMIPGLEQAEFVRYGVMHRNTYINAPVLLSPNLMLKSRPGLFIAGQLSGVEGYVESAAAGLVAGLNAARLYKGLEPLVFPPETAHGALINYIVTADPANFQPMNVNFGLFPPLPGKRVRRRPERNLAHAQRALERLAAWLTEKGEG.

9–14 is a binding site for FAD; sequence GAGLAG.

The protein belongs to the MnmG family. TrmFO subfamily. FAD is required as a cofactor.

It is found in the cytoplasm. It carries out the reaction uridine(54) in tRNA + (6R)-5,10-methylene-5,6,7,8-tetrahydrofolate + NADH + H(+) = 5-methyluridine(54) in tRNA + (6S)-5,6,7,8-tetrahydrofolate + NAD(+). The catalysed reaction is uridine(54) in tRNA + (6R)-5,10-methylene-5,6,7,8-tetrahydrofolate + NADPH + H(+) = 5-methyluridine(54) in tRNA + (6S)-5,6,7,8-tetrahydrofolate + NADP(+). Catalyzes the folate-dependent formation of 5-methyl-uridine at position 54 (M-5-U54) in all tRNAs. This Desulforudis audaxviator (strain MP104C) protein is Methylenetetrahydrofolate--tRNA-(uracil-5-)-methyltransferase TrmFO.